The chain runs to 699 residues: Osmotic avoidance abnormal protein 3 (699 aa).

The Kinesin motor domain occupies 4–327 (SVRVAVRCRP…LRYANRAKNI (324 aa)). 87 to 94 (GQTGSGKT) is an ATP binding site. Residues 339-523 (DALLREYQEE…EIEDLHGEFE (185 aa)) are a coiled coil.

It belongs to the TRAFAC class myosin-kinesin ATPase superfamily. Kinesin family. Kinesin II subfamily. Expressed in an exclusive set of 26 chemosensory neurons whose dendritic endings are exposed to the external environment; six IL2 neurons of the inner labial sensilla, 8 pairs of amphid neurons in the head, and 2 pairs of phasmid neurons in the tail.

Its subcellular location is the cytoplasm. The protein resides in the cytoskeleton. The protein localises to the cell projection. It localises to the cilium. It is found in the cilium axoneme. Its subcellular location is the cilium basal body. Kinesin motor protein which is required for the anterograde intraflagellar transport (IFT) along the middle segment of the sensory neuron cilia together with the kinesin II motor complex (composed of klp-11, klp-20 and kap-1) and on its own, is required for IFT along the distal segment. In addition, regulates the length of cilia. May have a role during neurogenesis and axonal transport. The sequence is that of Osmotic avoidance abnormal protein 3 from Caenorhabditis elegans.